The chain runs to 1107 residues: DNA polymerase delta catalytic subunit (1107 aa).

The disordered stretch occupies residues 1–34 (MDGKRRPGPGPGVPPKRARGGLWDDDDAPRPSQF). The short motif at 4–19 (KRRPGPGPGVPPKRAR) is the Nuclear localization signal element. Arg19 carries the omega-N-methylarginine modification. Residue Lys574 forms a Glycyl lysine isopeptide (Lys-Gly) (interchain with G-Cter in SUMO2) linkage. Zn(2+) is bound by residues Cys1012, Cys1015, Cys1026, and Cys1029. A CysA-type zinc finger spans residues 1012-1029 (CIGCRTVLSHQGAVCEFC). Residues Cys1058, Cys1061, Cys1071, and Cys1076 each coordinate [4Fe-4S] cluster. Residues 1058 to 1076 (CQRCQGSLHEDVICTSRDC) carry the CysB motif motif.

This sequence belongs to the DNA polymerase type-B family. Component of the tetrameric DNA polymerase delta complex (Pol-delta4), which consists of POLD1/p125, POLD2/p50, POLD3/p66/p68 and POLD4/p12, with POLD1 bearing both DNA polymerase and 3' to 5' proofreading exonuclease activities. Within Pol-delta4, directly interacts with POLD2 and POLD4. Following genotoxic stress by DNA-damaging agents, such as ultraviolet light and methyl methanesulfonate, or by replication stress induced by treatment with hydroxyurea or aphidicolin, Pol-delta4 is converted into a trimeric form of the complex (Pol-delta3) by POLD4 degradation. Pol-delta3 is the major form at S phase replication sites and DNA damage sites. POLD1 displays different catalytic properties depending upon the complex it is found in. It exhibits higher proofreading activity and fidelity than Pol-delta4, making it particularly well suited to respond to DNA damage. Directly interacts with PCNA, as do POLD3 and POLD4; this interaction stimulates Pol-delta4 polymerase activity. As POLD2 and POLD4, directly interacts with WRNIP1; this interaction stimulates DNA polymerase delta-mediated DNA synthesis, independently of the presence of PCNA. This stimulation may be due predominantly to an increase of initiation frequency and also to increased processivity. Also observed as a dimeric complex with POLD2 (Pol-delta2 complex). Pol-delta2 is relatively insensitive to the PCNA stimulation (2-5-fold) compared to Pol-delta4 that is stimulated by over 50-fold. The DNA polymerase delta complex interacts with POLDIP2; this interaction is probably mediated through direct binding to POLD2. Interacts with CIAO1. Interacts with POLDIP2. Interacts with RFC1. Requires [4Fe-4S] cluster as cofactor. As to expression, widely expressed, with high levels of expression in heart and lung.

The protein localises to the nucleus. It catalyses the reaction DNA(n) + a 2'-deoxyribonucleoside 5'-triphosphate = DNA(n+1) + diphosphate. With respect to regulation, regulated by alteration of quaternary structure. Exhibits burst rates of DNA synthesis are about 5 times faster in the presence of POLD4 (Pol-delta4 complex) than in its absence (Pol-delta3 complex), while the affinity of the enzyme for its DNA and dNTP substrates appears unchanged. The Pol-delta3 complex is more likely to proofread DNA synthesis because it cleaves single-stranded DNA twice as fast and transfers mismatched DNA from the polymerase to the exonuclease sites 9 times faster compared to the Pol-delta3 complex. Pol-delta3 also extends mismatched primers 3 times more slowly in the absence of POLD4. The conversion of Pol-delta4 into Pol-delta3 is induced by genotoxic stress or by replication stress leading POLD4 degradation. Stimulated in the presence of PCNA. This stimulation is further increased in the presence of KCTD13/PDIP1, most probably via direct interaction between KCTD13 and POLD2. Functionally, as the catalytic component of the trimeric (Pol-delta3 complex) and tetrameric DNA polymerase delta complexes (Pol-delta4 complex), plays a crucial role in high fidelity genome replication, including in lagging strand synthesis, and repair. Exhibits both DNA polymerase and 3'- to 5'-exonuclease activities. Requires the presence of accessory proteins POLD2, POLD3 and POLD4 for full activity. Depending upon the absence (Pol-delta3) or the presence of POLD4 (Pol-delta4), displays differences in catalytic activity. Most notably, expresses higher proofreading activity in the context of Pol-delta3 compared with that of Pol-delta4. Although both Pol-delta3 and Pol-delta4 process Okazaki fragments in vitro, Pol-delta3 may be better suited to fulfill this task, exhibiting near-absence of strand displacement activity compared to Pol-delta4 and stalling on encounter with the 5'-blocking oligonucleotides. Pol-delta3 idling process may avoid the formation of a gap, while maintaining a nick that can be readily ligated. Along with DNA polymerase kappa, DNA polymerase delta carries out approximately half of nucleotide excision repair (NER) synthesis following UV irradiation. Under conditions of DNA replication stress, in the presence of POLD3 and POLD4, may catalyze the repair of broken replication forks through break-induced replication (BIR). Involved in the translesion synthesis (TLS) of templates carrying O6-methylguanine, 8oxoG or abasic sites. The sequence is that of DNA polymerase delta catalytic subunit from Homo sapiens (Human).